Consider the following 334-residue polypeptide: Aspartate carbamoyltransferase catalytic subunit (334 aa).

Carbamoyl phosphate is bound by residues Arg71 and Thr72. Residue Lys99 coordinates L-aspartate. Positions 121, 151, and 154 each coordinate carbamoyl phosphate. L-aspartate-binding residues include Arg184 and Arg239. Carbamoyl phosphate-binding residues include Gly280 and Pro281.

Belongs to the aspartate/ornithine carbamoyltransferase superfamily. ATCase family. As to quaternary structure, heterododecamer (2C3:3R2) of six catalytic PyrB chains organized as two trimers (C3), and six regulatory PyrI chains organized as three dimers (R2).

The enzyme catalyses carbamoyl phosphate + L-aspartate = N-carbamoyl-L-aspartate + phosphate + H(+). Its pathway is pyrimidine metabolism; UMP biosynthesis via de novo pathway; (S)-dihydroorotate from bicarbonate: step 2/3. Catalyzes the condensation of carbamoyl phosphate and aspartate to form carbamoyl aspartate and inorganic phosphate, the committed step in the de novo pyrimidine nucleotide biosynthesis pathway. The sequence is that of Aspartate carbamoyltransferase catalytic subunit from Pseudomonas syringae pv. syringae (strain B728a).